The sequence spans 105 residues: ATP synthase F(0) complex subunit a (105 aa).

The next 3 helical transmembrane spans lie at 14 to 34 (EGTPVPLIPVLIIIETISLFI), 47 to 67 (LTAGHLLIQLIATAAFVLLPM), and 72 to 92 (AILTSIVLFLLTLLEIAVAMI).

This sequence belongs to the ATPase A chain family. Component of the ATP synthase complex composed at least of ATP5F1A/subunit alpha, ATP5F1B/subunit beta, ATP5MC1/subunit c (homooctomer), MT-ATP6/subunit a, MT-ATP8/subunit 8, ATP5ME/subunit e, ATP5MF/subunit f, ATP5MG/subunit g, ATP5MK/subunit k, ATP5MJ/subunit j, ATP5F1C/subunit gamma, ATP5F1D/subunit delta, ATP5F1E/subunit epsilon, ATP5PF/subunit F6, ATP5PB/subunit b, ATP5PD/subunit d, ATP5PO/subunit OSCP. ATP synthase complex consists of a soluble F(1) head domain (subunits alpha(3) and beta(3)) - the catalytic core - and a membrane F(0) domain - the membrane proton channel (subunits c, a, 8, e, f, g, k and j). These two domains are linked by a central stalk (subunits gamma, delta, and epsilon) rotating inside the F1 region and a stationary peripheral stalk (subunits F6, b, d, and OSCP). Interacts with DNAJC30; interaction is direct.

The protein localises to the mitochondrion inner membrane. It catalyses the reaction H(+)(in) = H(+)(out). In terms of biological role, subunit a, of the mitochondrial membrane ATP synthase complex (F(1)F(0) ATP synthase or Complex V) that produces ATP from ADP in the presence of a proton gradient across the membrane which is generated by electron transport complexes of the respiratory chain. ATP synthase complex consist of a soluble F(1) head domain - the catalytic core - and a membrane F(1) domain - the membrane proton channel. These two domains are linked by a central stalk rotating inside the F(1) region and a stationary peripheral stalk. During catalysis, ATP synthesis in the catalytic domain of F(1) is coupled via a rotary mechanism of the central stalk subunits to proton translocation. With the subunit c (ATP5MC1), forms the proton-conducting channel in the F(0) domain, that contains two crucial half-channels (inlet and outlet) that facilitate proton movement from the mitochondrial intermembrane space (IMS) into the matrix. Protons are taken up via the inlet half-channel and released through the outlet half-channel, following a Grotthuss mechanism. The sequence is that of ATP synthase F(0) complex subunit a from Salmo trutta (Brown trout).